Consider the following 223-residue polypeptide: Uracil-DNA glycosylase (223 aa).

Aspartate 64 functions as the Proton acceptor in the catalytic mechanism.

It belongs to the uracil-DNA glycosylase (UDG) superfamily. UNG family.

Its subcellular location is the cytoplasm. It catalyses the reaction Hydrolyzes single-stranded DNA or mismatched double-stranded DNA and polynucleotides, releasing free uracil.. Functionally, excises uracil residues from the DNA which can arise as a result of misincorporation of dUMP residues by DNA polymerase or due to deamination of cytosine. This is Uracil-DNA glycosylase from Desulfitobacterium hafniense (strain DSM 10664 / DCB-2).